A 462-amino-acid polypeptide reads, in one-letter code: Asparagine--tRNA ligase (462 aa).

Belongs to the class-II aminoacyl-tRNA synthetase family. In terms of assembly, homodimer.

It localises to the cytoplasm. The enzyme catalyses tRNA(Asn) + L-asparagine + ATP = L-asparaginyl-tRNA(Asn) + AMP + diphosphate + H(+). The protein is Asparagine--tRNA ligase of Borrelia garinii subsp. bavariensis (strain ATCC BAA-2496 / DSM 23469 / PBi) (Borreliella bavariensis).